The primary structure comprises 400 residues: MSSKLVLVLNCGSSSLKFAIIDATNGEEHISGLAECFHLPEARIKWKVDGGKQEAALGAGAAHSEALNFIVNTILAQKPALSAQLTAIGHRIVHGGEKFTSSVIVTEDVIQGIKDSIPFAPLHNPAHLIGIAEALKSFPNLADKNVAVFDTAFHQTMPEESYLYALPYSLYKDHGIRRYGAHGTSHFYVSQEAAKILNKPLGELNVITCHLGNGGSVTAVRNGKCVDTSMGLTPLEGLVMGTRSGDLDPAIIFHLHDAMGMSVDQINTLLTKESGLLGLTEVTSDCRYVEDNYATKADAKRAMDVFCHRLAKYIGSYTALMDGRLDAVVFTGGIGENAAMVRELTLDKLGLLGFEIDHERNMAARFGKSGTITKDSSRLALVIPTNEELVIAQDAARLTA.

Position 10 (Asn10) interacts with Mg(2+). Position 17 (Lys17) interacts with ATP. Arg91 is a binding site for substrate. The active-site Proton donor/acceptor is the Asp150. Residues 210–214 (HLGNG), 285–287 (DCR), and 333–337 (GIGEN) contribute to the ATP site. Residue Glu387 coordinates Mg(2+).

This sequence belongs to the acetokinase family. Homodimer. Mg(2+) is required as a cofactor. It depends on Mn(2+) as a cofactor.

It localises to the cytoplasm. It carries out the reaction acetate + ATP = acetyl phosphate + ADP. It functions in the pathway metabolic intermediate biosynthesis; acetyl-CoA biosynthesis; acetyl-CoA from acetate: step 1/2. Functionally, catalyzes the formation of acetyl phosphate from acetate and ATP. Can also catalyze the reverse reaction. In Yersinia pseudotuberculosis serotype IB (strain PB1/+), this protein is Acetate kinase.